The chain runs to 220 residues: Ribosomal RNA small subunit methyltransferase G (220 aa).

S-adenosyl-L-methionine-binding positions include glycine 82, leucine 87, 105–107 (DST), 133–134 (VE), and arginine 147.

The protein belongs to the methyltransferase superfamily. RNA methyltransferase RsmG family.

The protein resides in the cytoplasm. Functionally, specifically methylates the N7 position of a guanine in 16S rRNA. This chain is Ribosomal RNA small subunit methyltransferase G, found in Chlorobium limicola (strain DSM 245 / NBRC 103803 / 6330).